Reading from the N-terminus, the 637-residue chain is 1-deoxy-D-xylulose-5-phosphate synthase (637 aa).

Residues histidine 72 and 113–115 (GHA) each bind thiamine diphosphate. Aspartate 144 provides a ligand contact to Mg(2+). Thiamine diphosphate contacts are provided by residues 145 to 146 (GA), asparagine 174, tyrosine 287, and glutamate 370. Asparagine 174 contributes to the Mg(2+) binding site.

Belongs to the transketolase family. DXPS subfamily. Homodimer. Requires Mg(2+) as cofactor. It depends on thiamine diphosphate as a cofactor.

The enzyme catalyses D-glyceraldehyde 3-phosphate + pyruvate + H(+) = 1-deoxy-D-xylulose 5-phosphate + CO2. It participates in metabolic intermediate biosynthesis; 1-deoxy-D-xylulose 5-phosphate biosynthesis; 1-deoxy-D-xylulose 5-phosphate from D-glyceraldehyde 3-phosphate and pyruvate: step 1/1. In terms of biological role, catalyzes the acyloin condensation reaction between C atoms 2 and 3 of pyruvate and glyceraldehyde 3-phosphate to yield 1-deoxy-D-xylulose-5-phosphate (DXP). This Prochlorococcus marinus subsp. pastoris (strain CCMP1986 / NIES-2087 / MED4) protein is 1-deoxy-D-xylulose-5-phosphate synthase.